Consider the following 494-residue polypeptide: MRSETDVVVIGAGMGGLAAAIGAAAAGLRVTVVEAGDAPGGKARAVPTPGGPADTGPTVLTMRHVLDALFAACGTRAEEHLTLIPLPRLARHFWPDGSSLDLFTDTEANIEAIRAFAGDKEAAAFRRFDHLTTGLWEAFHRSVIAAPKPDLWRIAAATVTRPQLWPALRPGLTMRDLLAHHFKDPRLAQLFGRYATYVGGRPGATPAVLSLIWQAEVQGVWAIREGMHGVAAALARVAEAKGVRFHYGAKAKRIVRKEGRVTAVEIETGVSIPCGACIFNGDPGALRDGLLGDAARASMEKSPRPAPSLSAWVWAFGATPIGVDLAHHNVFFTADPELEFGPIGAGEMPEEPTLYICAQDREMQAPVPEIERFEIIMNGPAGHQPFPQEEAQCRARTFPMLAAMGLTFSPDPETRALTTPALLSRRFPGSLGAIYGGSPEGTLATFRRPLARTGLKGLYLAGGGTHPGAGVPMALTSGTHAARALLADRISAAK.

Belongs to the carotenoid/retinoid oxidoreductase family.

It catalyses the reaction rhodopin + A = (3E)-3,4-didehydrorhodopin + AH2. The protein operates within carotenoid biosynthesis; spheroidene biosynthesis. In terms of biological role, catalyzes the introduction of C-3,4 double bonds into 1-hydroxyneurosporene (1-HO-Neu) to yield demethylspheroidene (DMS). This Rhodobacter capsulatus (strain ATCC BAA-309 / NBRC 16581 / SB1003) protein is Hydroxyneurosporene desaturase (crtD).